The chain runs to 62 residues: MDMKKLIERINFLYKKSKEEGLTKEEKVEQQKLRREYTDIIKGNVKVQLEGVEKIPTPNRKN.

It belongs to the UPF0291 family.

It localises to the cytoplasm. This chain is UPF0291 protein CLB_2550, found in Clostridium botulinum (strain ATCC 19397 / Type A).